Reading from the N-terminus, the 84-residue chain is Cell division topological specificity factor (84 aa).

This sequence belongs to the MinE family.

Prevents the cell division inhibition by proteins MinC and MinD at internal division sites while permitting inhibition at polar sites. This ensures cell division at the proper site by restricting the formation of a division septum at the midpoint of the long axis of the cell. The polypeptide is Cell division topological specificity factor (Ralstonia pickettii (strain 12J)).